Consider the following 482-residue polypeptide: MLNKDANGFQDLDPQYSFISKVHIIASKIKPEDDEKLHSILDESDIRDWESRKGLAKVLQFMERSWIETHKNLRALISKERPDFIFGDLLDQQACVDMRNEFNIPMAIHFGQMPFHLAPAKYIPGLPGFQQRYLTSEHASIWGRISEDFFALGLVFSLRHHFRWRKQMRDQAGAAPLAFSRKPDSLILVNTFFGFEPPKELPPLLVPVGPILSDNYSPLTPELESFLSTHKNVLYIAFGSHINLTGGSRFTKLFDGINSAIQSGFIDGVVWTLKPPKTSSSSSNPLPNFDPKFYHITPFAPQRAILAHPSTTLFLSHCGASSINEALFHGVPILGLPIYNDQFKYALCIENVGVGLKMDKTDFEAKEVHQKIGRMTTEPSFQQDSKRMMGIARIAARRKHLAADLIEEELLDHEGRFSLSSKSDVRHRRPPHLQTASARMSWFRAGNYDIYLVYALVLGSAWWIGKTILGTGIKLAMGKWLR.

Residue Asn243 is glycosylated (N-linked (GlcNAc...) asparagine). A helical transmembrane segment spans residues 450 to 470 (IYLVYALVLGSAWWIGKTILG).

It belongs to the glycosyltransferase 28 family.

It localises to the membrane. The catalysed reaction is exophillate aglycone + UDP-alpha-D-glucose = exophillate + UDP + H(+). It participates in secondary metabolite biosynthesis. In terms of biological role, acts as a depside 2-O-glucosyltransferase that catalyzes the first glycosylation step during phaeomoniecin D biosynthesis by producing the intermediate exophillic acid which is further O-galactosylated into phaeomoniecin D by the C-galactosyltransferase OGT2. In Phaeomoniella chlamydospora (Phaeoacremonium chlamydosporum), this protein is UDP-glycosyltransferase 1.